A 56-amino-acid polypeptide reads, in one-letter code: MAKEKATLPPTGAGLMRFFDEDTKAVKISPRGVIALTLILVALEILLHAFGPQIFG.

The Cytoplasmic segment spans residues methionine 1–serine 29. The helical transmembrane segment at proline 30–glycine 51 threads the bilayer. Residues proline 52–glycine 56 lie on the Extracellular side of the membrane.

The protein belongs to the SEC61-beta family. Component of the protein translocase complex. Heterotrimer consisting of alpha (SecY), beta (SecG) and gamma (SecE) subunits. Can form oligomers of the heterotrimer.

The protein resides in the cell membrane. In terms of biological role, involved in protein export. The function of the beta subunit is unknown, but it may be involved in stabilization of the trimeric complex. The polypeptide is Preprotein translocase subunit SecG (Thermococcus onnurineus (strain NA1)).